The primary structure comprises 380 residues: ATP phosphoribosyltransferase regulatory subunit (380 aa).

This sequence belongs to the class-II aminoacyl-tRNA synthetase family. HisZ subfamily. As to quaternary structure, heteromultimer composed of HisG and HisZ subunits.

The protein resides in the cytoplasm. Its pathway is amino-acid biosynthesis; L-histidine biosynthesis; L-histidine from 5-phospho-alpha-D-ribose 1-diphosphate: step 1/9. Functionally, required for the first step of histidine biosynthesis. May allow the feedback regulation of ATP phosphoribosyltransferase activity by histidine. This Thermoanaerobacter pseudethanolicus (strain ATCC 33223 / 39E) (Clostridium thermohydrosulfuricum) protein is ATP phosphoribosyltransferase regulatory subunit.